We begin with the raw amino-acid sequence, 140 residues long: UPF0336 protein TW736 (140 aa).

This sequence belongs to the UPF0336 family.

The polypeptide is UPF0336 protein TW736 (Tropheryma whipplei (strain TW08/27) (Whipple's bacillus)).